A 108-amino-acid polypeptide reads, in one-letter code: Large ribosomal subunit protein uL24 (108 aa).

This sequence belongs to the universal ribosomal protein uL24 family. As to quaternary structure, part of the 50S ribosomal subunit.

Functionally, one of two assembly initiator proteins, it binds directly to the 5'-end of the 23S rRNA, where it nucleates assembly of the 50S subunit. Its function is as follows. One of the proteins that surrounds the polypeptide exit tunnel on the outside of the subunit. In Geobacter sulfurreducens (strain ATCC 51573 / DSM 12127 / PCA), this protein is Large ribosomal subunit protein uL24.